We begin with the raw amino-acid sequence, 203 residues long: Leucyl/phenylalanyl-tRNA--protein transferase (203 aa).

It belongs to the L/F-transferase family.

The protein localises to the cytoplasm. It carries out the reaction N-terminal L-lysyl-[protein] + L-leucyl-tRNA(Leu) = N-terminal L-leucyl-L-lysyl-[protein] + tRNA(Leu) + H(+). The catalysed reaction is N-terminal L-arginyl-[protein] + L-leucyl-tRNA(Leu) = N-terminal L-leucyl-L-arginyl-[protein] + tRNA(Leu) + H(+). It catalyses the reaction L-phenylalanyl-tRNA(Phe) + an N-terminal L-alpha-aminoacyl-[protein] = an N-terminal L-phenylalanyl-L-alpha-aminoacyl-[protein] + tRNA(Phe). Functions in the N-end rule pathway of protein degradation where it conjugates Leu, Phe and, less efficiently, Met from aminoacyl-tRNAs to the N-termini of proteins containing an N-terminal arginine or lysine. The chain is Leucyl/phenylalanyl-tRNA--protein transferase from Chelativorans sp. (strain BNC1).